A 389-amino-acid chain; its full sequence is Phosphoribosylformylglycinamidine cyclo-ligase, chloroplastic (389 aa).

Residues 1–58 constitute a chloroplast transit peptide; that stretch reads MEARILQSSSSCYSSLYAVNRSRFSSVSSPKPFSVSFAQTTRTRTRVLSMSKKDGRTD. The disordered stretch occupies residues 46-65; the sequence is RVLSMSKKDGRTDKDDDTDS.

This sequence belongs to the AIR synthase family.

The protein localises to the plastid. It is found in the chloroplast. The enzyme catalyses 2-formamido-N(1)-(5-O-phospho-beta-D-ribosyl)acetamidine + ATP = 5-amino-1-(5-phospho-beta-D-ribosyl)imidazole + ADP + phosphate + H(+). It functions in the pathway purine metabolism; IMP biosynthesis via de novo pathway; 5-amino-1-(5-phospho-D-ribosyl)imidazole from N(2)-formyl-N(1)-(5-phospho-D-ribosyl)glycinamide: step 2/2. The protein is Phosphoribosylformylglycinamidine cyclo-ligase, chloroplastic (PUR5) of Arabidopsis thaliana (Mouse-ear cress).